The sequence spans 243 residues: 3-deoxy-manno-octulosonate cytidylyltransferase (243 aa).

The protein belongs to the KdsB family.

Its subcellular location is the cytoplasm. The catalysed reaction is 3-deoxy-alpha-D-manno-oct-2-ulosonate + CTP = CMP-3-deoxy-beta-D-manno-octulosonate + diphosphate. It participates in nucleotide-sugar biosynthesis; CMP-3-deoxy-D-manno-octulosonate biosynthesis; CMP-3-deoxy-D-manno-octulosonate from 3-deoxy-D-manno-octulosonate and CTP: step 1/1. The protein operates within bacterial outer membrane biogenesis; lipopolysaccharide biosynthesis. Its function is as follows. Activates KDO (a required 8-carbon sugar) for incorporation into bacterial lipopolysaccharide in Gram-negative bacteria. The polypeptide is 3-deoxy-manno-octulosonate cytidylyltransferase (Bartonella henselae (strain ATCC 49882 / DSM 28221 / CCUG 30454 / Houston 1) (Rochalimaea henselae)).